Here is a 545-residue protein sequence, read N- to C-terminus: RNA-directed RNA polymerase beta chain (545 aa).

The region spanning 243-373 (RLAQQGSRDG…PNLRKTFTSG (131 aa)) is the RdRp catalytic domain.

Part of the viral RNA-dependent RNA polymerase complex, the other subunits are probably the host ribosomal protein S1, EF-Tu and EF-Ts.

It catalyses the reaction RNA(n) + a ribonucleoside 5'-triphosphate = RNA(n+1) + diphosphate. In terms of biological role, this is the catalytic subunit of the viral RNA-dependent RNA polymerase complex. This complex is involved in viral RNA replication that produces (+)-stranded genomes via a complementary, (-)-stranded intermediate. The protein is RNA-directed RNA polymerase beta chain of Enterobacteria phage fr (Bacteriophage fr).